We begin with the raw amino-acid sequence, 256 residues long: Gluconate 5-dehydrogenase (256 aa).

15–39 is a binding site for NADP(+); it reads LVTGASRGIGLTLAKGLARYGAEVV. A substrate-binding site is contributed by Ser147. Tyr160 serves as the catalytic Proton acceptor.

Belongs to the short-chain dehydrogenases/reductases (SDR) family. As to quaternary structure, homodimer.

It localises to the cytoplasm. The enzyme catalyses D-gluconate + NADP(+) = 5-dehydro-D-gluconate + NADPH + H(+). Functionally, catalyzes the reversible NADP-dependent oxidation of gluconate to 5-ketogluconate. Is involved in the non-phosphorylative, ketogenic oxidation of glucose. Is almost inactive with NAD as cosubstrate. Displays high substrate specificity since D-Glucose, D-sorbitol, and D-mannitol are not oxidized by the enzyme, and 2-ketogluconate and L-sorbose are not reduced. Can accept D-fructose as a substrate, with a rate that is only 10% of the rate of 5-ketogluconate reduction. This chain is Gluconate 5-dehydrogenase, found in Gluconobacter oxydans (strain 621H) (Gluconobacter suboxydans).